We begin with the raw amino-acid sequence, 414 residues long: Membrane protein UL43 (414 aa).

The next 6 helical transmembrane spans lie at 39–59, 61–81, 96–116, 121–141, 148–168, and 184–204; these read GFAHLWLQAATLGFVGSVVLS, GPYADAMSGAFVIGSTGLGFL, AWLRLVGGGAAVALWSLGEAG, VPGPATQCLALGAAYAALLVL, LFLLAPRPLFVGTLGVVVGGL, and AAALTAAVVAGLGTTAAGDSF. The segment at 225-253 is disordered; that stretch reads PRYAPEDAERPTDHGPLLPSTHHQRSPRV. Residues 228–237 show a composition bias toward basic and acidic residues; that stretch reads APEDAERPTD. Transmembrane regions (helical) follow at residues 339–359 and 383–403; these read GLMFVVPDIAVYAMLGGAVWI and ATLRGLFFSVYALGFAAGVLV.

It belongs to the alphaherpesvirinae HHV-1 UL43 family.

It localises to the membrane. This is Membrane protein UL43 from Homo sapiens (Human).